The following is a 225-amino-acid chain: Uracil-DNA glycosylase (225 aa).

Asp65 functions as the Proton acceptor in the catalytic mechanism.

It belongs to the uracil-DNA glycosylase (UDG) superfamily. UNG family.

The protein localises to the cytoplasm. It carries out the reaction Hydrolyzes single-stranded DNA or mismatched double-stranded DNA and polynucleotides, releasing free uracil.. Excises uracil residues from the DNA which can arise as a result of misincorporation of dUMP residues by DNA polymerase or due to deamination of cytosine. The polypeptide is Uracil-DNA glycosylase (Alkaliphilus oremlandii (strain OhILAs) (Clostridium oremlandii (strain OhILAs))).